The following is a 599-amino-acid chain: Sulfite reductase [NADPH] flavoprotein alpha-component (599 aa).

The 139-residue stretch at 64-202 (VTLISASQTG…AASEWRARVV (139 aa)) folds into the Flavodoxin-like domain. FMN is bound by residues 70-75 (SQTGNA), 117-120 (STQG), and 153-162 (LGDTSYEFFC). Residues 234–448 (DAPLTATLSV…IEHNDNFRLP (215 aa)) form the FAD-binding FR-type domain. FAD-binding positions include Thr-322, Ala-356, 386–389 (RLYS), 404–406 (TVG), Tyr-410, and 419–422 (GGAS). NADP(+) contacts are provided by residues 519–520 (SR), 525–529 (KIYVQ), and Asp-561. Tyr-599 serves as a coordination point for FAD.

The protein belongs to the NADPH-dependent sulphite reductase flavoprotein subunit CysJ family. It in the N-terminal section; belongs to the flavodoxin family. This sequence in the C-terminal section; belongs to the flavoprotein pyridine nucleotide cytochrome reductase family. As to quaternary structure, alpha(8)-beta(8). The alpha component is a flavoprotein, the beta component is a hemoprotein. It depends on FAD as a cofactor. Requires FMN as cofactor.

The catalysed reaction is hydrogen sulfide + 3 NADP(+) + 3 H2O = sulfite + 3 NADPH + 4 H(+). Its pathway is sulfur metabolism; hydrogen sulfide biosynthesis; hydrogen sulfide from sulfite (NADPH route): step 1/1. In terms of biological role, component of the sulfite reductase complex that catalyzes the 6-electron reduction of sulfite to sulfide. This is one of several activities required for the biosynthesis of L-cysteine from sulfate. The flavoprotein component catalyzes the electron flow from NADPH -&gt; FAD -&gt; FMN to the hemoprotein component. The chain is Sulfite reductase [NADPH] flavoprotein alpha-component from Salmonella paratyphi A (strain ATCC 9150 / SARB42).